A 153-amino-acid chain; its full sequence is Ribosome maturation factor RimP (153 aa).

This sequence belongs to the RimP family.

Its subcellular location is the cytoplasm. In terms of biological role, required for maturation of 30S ribosomal subunits. In Rippkaea orientalis (strain PCC 8801 / RF-1) (Cyanothece sp. (strain PCC 8801)), this protein is Ribosome maturation factor RimP.